Here is a 329-residue protein sequence, read N- to C-terminus: DNA-directed RNA polymerase subunit alpha (329 aa).

Residues 1–235 (MQGSVTEFLK…EQLDAFVDLR (235 aa)) form an alpha N-terminal domain (alpha-NTD) region. Residues 249 to 329 (FDPILLRPVD…NWPPASIAED (81 aa)) are alpha C-terminal domain (alpha-CTD).

The protein belongs to the RNA polymerase alpha chain family. In terms of assembly, homodimer. The RNAP catalytic core consists of 2 alpha, 1 beta, 1 beta' and 1 omega subunit. When a sigma factor is associated with the core the holoenzyme is formed, which can initiate transcription.

It carries out the reaction RNA(n) + a ribonucleoside 5'-triphosphate = RNA(n+1) + diphosphate. Its function is as follows. DNA-dependent RNA polymerase catalyzes the transcription of DNA into RNA using the four ribonucleoside triphosphates as substrates. In Aliivibrio fischeri (strain ATCC 700601 / ES114) (Vibrio fischeri), this protein is DNA-directed RNA polymerase subunit alpha.